The sequence spans 390 residues: S-adenosylmethionine synthase 2 (390 aa).

Residue Glu-9 participates in Mg(2+) binding. His-15 lines the ATP pocket. Residue Glu-43 coordinates K(+). L-methionine contacts are provided by Glu-56 and Gln-99. ATP-binding positions include 167-169 (DGK), 235-238 (SGRF), Asp-246, 252-253 (RK), Ala-269, Lys-273, and Lys-277. Residue Asp-246 participates in L-methionine binding. Residue Lys-277 participates in L-methionine binding.

This sequence belongs to the AdoMet synthase family. As to quaternary structure, homotetramer. It depends on Mn(2+) as a cofactor. Requires Mg(2+) as cofactor. Co(2+) is required as a cofactor. K(+) serves as cofactor.

The protein localises to the cytoplasm. The catalysed reaction is L-methionine + ATP + H2O = S-adenosyl-L-methionine + phosphate + diphosphate. The protein operates within amino-acid biosynthesis; S-adenosyl-L-methionine biosynthesis; S-adenosyl-L-methionine from L-methionine: step 1/1. Its function is as follows. Catalyzes the formation of S-adenosylmethionine from methionine and ATP. The reaction comprises two steps that are both catalyzed by the same enzyme: formation of S-adenosylmethionine (AdoMet) and triphosphate, and subsequent hydrolysis of the triphosphate. This Actinidia chinensis var. chinensis (Chinese soft-hair kiwi) protein is S-adenosylmethionine synthase 2 (SAM2).